A 293-amino-acid polypeptide reads, in one-letter code: Bifunctional protein FolD (293 aa).

NADP(+) contacts are provided by residues 166–168 (GRS), serine 191, and isoleucine 232.

Belongs to the tetrahydrofolate dehydrogenase/cyclohydrolase family. In terms of assembly, homodimer.

It catalyses the reaction (6R)-5,10-methylene-5,6,7,8-tetrahydrofolate + NADP(+) = (6R)-5,10-methenyltetrahydrofolate + NADPH. It carries out the reaction (6R)-5,10-methenyltetrahydrofolate + H2O = (6R)-10-formyltetrahydrofolate + H(+). It functions in the pathway one-carbon metabolism; tetrahydrofolate interconversion. Catalyzes the oxidation of 5,10-methylenetetrahydrofolate to 5,10-methenyltetrahydrofolate and then the hydrolysis of 5,10-methenyltetrahydrofolate to 10-formyltetrahydrofolate. In Synechococcus sp. (strain JA-2-3B'a(2-13)) (Cyanobacteria bacterium Yellowstone B-Prime), this protein is Bifunctional protein FolD.